The sequence spans 597 residues: Elongation factor 4 (597 aa).

The region spanning 2 to 184 is the tr-type G domain; that stretch reads DHIRNFSIIA…ALVAKVPPPK (183 aa). Residues 14 to 19 and 131 to 134 contribute to the GTP site; these read DHGKST and NKID.

It belongs to the TRAFAC class translation factor GTPase superfamily. Classic translation factor GTPase family. LepA subfamily.

It localises to the cell inner membrane. The catalysed reaction is GTP + H2O = GDP + phosphate + H(+). Functionally, required for accurate and efficient protein synthesis under certain stress conditions. May act as a fidelity factor of the translation reaction, by catalyzing a one-codon backward translocation of tRNAs on improperly translocated ribosomes. Back-translocation proceeds from a post-translocation (POST) complex to a pre-translocation (PRE) complex, thus giving elongation factor G a second chance to translocate the tRNAs correctly. Binds to ribosomes in a GTP-dependent manner. This chain is Elongation factor 4, found in Paraburkholderia xenovorans (strain LB400).